The chain runs to 424 residues: Glucose-1-phosphate adenylyltransferase (424 aa).

Residues tyrosine 112, glycine 177, glutamate 192 to lysine 193, and serine 210 each bind alpha-D-glucose 1-phosphate.

This sequence belongs to the bacterial/plant glucose-1-phosphate adenylyltransferase family. In terms of assembly, homotetramer.

It catalyses the reaction alpha-D-glucose 1-phosphate + ATP + H(+) = ADP-alpha-D-glucose + diphosphate. The protein operates within glycan biosynthesis; glycogen biosynthesis. Involved in the biosynthesis of ADP-glucose, a building block required for the elongation reactions to produce glycogen. Catalyzes the reaction between ATP and alpha-D-glucose 1-phosphate (G1P) to produce pyrophosphate and ADP-Glc. This chain is Glucose-1-phosphate adenylyltransferase, found in Methylococcus capsulatus (strain ATCC 33009 / NCIMB 11132 / Bath).